A 182-amino-acid polypeptide reads, in one-letter code: uncharacterized protein (182 aa).

The Macro domain occupies 1-170 (MIVKIIKGDI…IFVNIFEREL (170 aa)).

This is an uncharacterized protein from Sulfurisphaera tokodaii (strain DSM 16993 / JCM 10545 / NBRC 100140 / 7) (Sulfolobus tokodaii).